The primary structure comprises 761 residues: uncharacterized protein (761 aa).

8 TPR repeats span residues 35–68 (EEGK…SLNS), 69–102 (AQGL…SDVD), 103–136 (DALY…NPNK), 137–170 (VEIL…KPDF), 172–203 (EAEE…KNPN), 204–237 (EEVY…FPHD), 351–384 (LGVL…NPSA), and 419–452 (ASAG…VKEE). The segment at 487-761 (KRPIFVLGMP…PKGLVGYTVG (275 aa)) is protein sulfotransferase-like.

In the C-terminal section; belongs to the protein sulfotransferase family.

This is an uncharacterized protein from Aquifex aeolicus (strain VF5).